The chain runs to 60 residues: uncharacterized protein (60 aa).

An N-terminal signal peptide occupies residues M1 to A21.

This is an uncharacterized protein from Rickettsia prowazekii (strain Madrid E).